The following is a 120-amino-acid chain: Large ribosomal subunit protein bL21 (120 aa).

The protein belongs to the bacterial ribosomal protein bL21 family. Part of the 50S ribosomal subunit. Contacts protein L20.

This protein binds to 23S rRNA in the presence of protein L20. The protein is Large ribosomal subunit protein bL21 of Rhizorhabdus wittichii (strain DSM 6014 / CCUG 31198 / JCM 15750 / NBRC 105917 / EY 4224 / RW1) (Sphingomonas wittichii).